The sequence spans 611 residues: MSFSEKIKSLPDQPGIYQYFDENGKLLYIGKAKSLKKRVKSYFRFNPFRPADNLSPRIYKMISEAKDLNYIVVESENDALILENSLIKQLKPKYNILLRDDKTYPYIYIDLDEPFPMPQITRKVVKGKNIKYFGPFSSGASAILKTIYEEIPLVQSKSCLRSGKACLYHQIGRCLAPCEGKVTSREYMKYVDQAIELIHDKEKILEILNQKMQKYAENLQFEEAAEIRDRIKSIESAEIYSHVDLAKLEDLDIFAVEIFNKKAVVIRIFVRQGKVVASSNSVINSQTVPEIGEIYTRAILEFYSTETPFTSSKILVGDDFEEREWLSQVLSEKFGKKISIITPTTKERKSLIKLAKLNALEVIKNQKENTVLDELKILFNLQNTPYKIEVFDTSHMQGEATVGAMVVWEDGKFKKSDYRHYHLEGKDEYSQMRELLTRRAQSFEKSPPPDLWLIDGGKAQLNLAKEIIDSTGANIDVLAISKEKIDAKAHRAKGKAKDKIYFINEKLKVKSEKLNIDKLELSQSDKRLQFLQMLRDEAHRFAIEFHRKTKRKKDTQIDLLQVKGIGKAKMTKLLNYFGSFDNIKKASFDELKDVLNEKDAKAIKEFFKGQK.

In terms of domain architecture, GIY-YIG spans 12 to 96; it reads DQPGIYQYFD…IKQLKPKYNI (85 aa). The region spanning 202 to 237 is the UVR domain; that stretch reads EKILEILNQKMQKYAENLQFEEAAEIRDRIKSIESA.

The protein belongs to the UvrC family. Interacts with UvrB in an incision complex.

The protein localises to the cytoplasm. In terms of biological role, the UvrABC repair system catalyzes the recognition and processing of DNA lesions. UvrC both incises the 5' and 3' sides of the lesion. The N-terminal half is responsible for the 3' incision and the C-terminal half is responsible for the 5' incision. The polypeptide is UvrABC system protein C (Nautilia profundicola (strain ATCC BAA-1463 / DSM 18972 / AmH)).